The sequence spans 154 residues: Cell cycle regulator of non-homologous end joining (154 aa).

M1 is modified (N-acetylmethionine). Positions 1–21 (METLKSENKKRVLPSWMTAPV) match the KBM motif. Positions 77–144 (EEPTLVAPDK…RSPEEEEEDA (68 aa)) are disordered. Low complexity predominate over residues 95–105 (ASPHTSSPGSS). Positions 144 to 154 (ALKYVREIFFS) match the XLM motif.

In terms of assembly, interacts (via KBM motif) with XRCC5/Ku80 and XRCC6/Ku70 heterodimer. Interacts (via XLF motif) with TRIM28/KAP1, ATM, MRE11, NBN and RAD50. Interacts with splicing factor SF3B1. Interacts with ERCC6L2; this interaction is DNA independent.

It localises to the cytoplasm. The protein resides in the nucleus. The protein localises to the chromosome. Cell-cycle-specific regulator of classical non-homologous end joining (NHEJ) of DNA double-strand break (DSB) repair, which can act both as an activator or inhibitor of NHEJ, depending on the cell cycle phase. Acts as a regulator of DNA repair pathway choice by specifically inhibiting classical NHEJ during the S and G2 phases, thereby promoting error-free repair by homologous recombination during cell cycle phases when sister chromatids are present. Preferentially protects single-stranded overhangs at break sites by inhibiting classical NHEJ, thereby creating a local environment that favors homologous recombination. Acts via interaction with XRCC5/Ku80 and XRCC6/Ku70. In contrast, acts as an activator of NHEJ during G1 phase of the cell cycle: promotes classical NHEJ in G1 phase cells via multivalent interactions that increase the affinity of DNA damage response proteins for DSB-associated chromatin. Also involved in immunoglobulin V(D)J recombination. May act as a regulator of proteasome. In case of infection by a retrovirus, may regulate the proteasome during the uncoating phase of retrovirus. The polypeptide is Cell cycle regulator of non-homologous end joining (Cricetulus griseus (Chinese hamster)).